The sequence spans 262 residues: Probable lipoprotein EnvF (262 aa).

A signal peptide spans 1–25 (MNKIHVTYKNLLLPITFIAATLISA). Residue Cys26 is the site of N-palmitoyl cysteine attachment. Cys26 carries the S-diacylglycerol cysteine lipid modification. Residues 227–262 (EAEKAQQLVEQSRKDIESQRKKAAGKMNEIQQTFKK) form a disordered region. Residues 237–246 (QSRKDIESQR) are compositionally biased toward basic and acidic residues.

It is found in the cell membrane. This chain is Probable lipoprotein EnvF (envF), found in Salmonella typhimurium (strain LT2 / SGSC1412 / ATCC 700720).